The primary structure comprises 348 residues: GDSL esterase/lipase At4g30140 (348 aa).

The signal sequence occupies residues 1–28 (MVEGESKALWIILATVFAVAAVAPAVHG). Residue Ser40 is the Nucleophile of the active site. Catalysis depends on residues Asp316 and His319. Asn342 carries an N-linked (GlcNAc...) asparagine glycan.

It belongs to the 'GDSL' lipolytic enzyme family.

The protein resides in the secreted. The sequence is that of GDSL esterase/lipase At4g30140 from Arabidopsis thaliana (Mouse-ear cress).